Here is a 437-residue protein sequence, read N- to C-terminus: Adenylosuccinate synthetase (437 aa).

GTP contacts are provided by residues 12 to 18 and 40 to 42; these read GDEGKGK and GHT. D13 functions as the Proton acceptor in the catalytic mechanism. The Mg(2+) site is built by D13 and G40. Residues 13 to 16, 38 to 41, T131, R145, Q226, T241, and R305 contribute to the IMP site; these read DEGK and NAGH. H41 (proton donor) is an active-site residue. 301-307 is a substrate binding site; the sequence is ATTGRRR. GTP contacts are provided by residues R307, 333–335, and 415–417; these read KLD and SVG.

This sequence belongs to the adenylosuccinate synthetase family. As to quaternary structure, homodimer. Mg(2+) is required as a cofactor.

It localises to the cytoplasm. The enzyme catalyses IMP + L-aspartate + GTP = N(6)-(1,2-dicarboxyethyl)-AMP + GDP + phosphate + 2 H(+). The protein operates within purine metabolism; AMP biosynthesis via de novo pathway; AMP from IMP: step 1/2. In terms of biological role, plays an important role in the de novo pathway of purine nucleotide biosynthesis. Catalyzes the first committed step in the biosynthesis of AMP from IMP. In Desulfotalea psychrophila (strain LSv54 / DSM 12343), this protein is Adenylosuccinate synthetase.